The sequence spans 156 residues: Small ribosomal subunit protein uS7 (156 aa).

It belongs to the universal ribosomal protein uS7 family. As to quaternary structure, part of the 30S ribosomal subunit. Contacts proteins S9 and S11.

Functionally, one of the primary rRNA binding proteins, it binds directly to 16S rRNA where it nucleates assembly of the head domain of the 30S subunit. Is located at the subunit interface close to the decoding center, probably blocks exit of the E-site tRNA. The polypeptide is Small ribosomal subunit protein uS7 (Prochlorococcus marinus (strain SARG / CCMP1375 / SS120)).